A 248-amino-acid polypeptide reads, in one-letter code: UPF0246 protein RPR_00055 (248 aa).

Belongs to the UPF0246 family.

The protein is UPF0246 protein RPR_00055 of Rickettsia peacockii (strain Rustic).